The chain runs to 327 residues: Tagatose 1,6-diphosphate aldolase 2 (327 aa).

Belongs to the aldolase LacD family.

It carries out the reaction D-tagatofuranose 1,6-bisphosphate = D-glyceraldehyde 3-phosphate + dihydroxyacetone phosphate. Its pathway is carbohydrate metabolism; D-tagatose 6-phosphate degradation; D-glyceraldehyde 3-phosphate and glycerone phosphate from D-tagatose 6-phosphate: step 2/2. This Streptococcus pyogenes serotype M6 (strain ATCC BAA-946 / MGAS10394) protein is Tagatose 1,6-diphosphate aldolase 2.